Here is an 85-residue protein sequence, read N- to C-terminus: UPF0512 protein R (85 aa).

Belongs to the UPF0512 family.

In Dictyostelium discoideum (Social amoeba), this protein is UPF0512 protein R.